Consider the following 389-residue polypeptide: Chalcone synthase 9 (389 aa).

Residue cysteine 164 is part of the active site.

Belongs to the thiolase-like superfamily. Chalcone/stilbene synthases family.

It carries out the reaction (E)-4-coumaroyl-CoA + 3 malonyl-CoA + 3 H(+) = 2',4,4',6'-tetrahydroxychalcone + 3 CO2 + 4 CoA. It participates in secondary metabolite biosynthesis; flavonoid biosynthesis. Its function is as follows. The primary product of this enzyme is 4,2',4',6'-tetrahydroxychalcone (also termed naringenin-chalcone or chalcone) which can under specific conditions spontaneously isomerize into naringenin. This chain is Chalcone synthase 9 (CHS9), found in Daucus carota (Wild carrot).